A 428-amino-acid chain; its full sequence is ATP phosphoribosyltransferase regulatory subunit (428 aa).

This sequence belongs to the class-II aminoacyl-tRNA synthetase family. HisZ subfamily. Heteromultimer composed of HisG and HisZ subunits.

The protein resides in the cytoplasm. The protein operates within amino-acid biosynthesis; L-histidine biosynthesis; L-histidine from 5-phospho-alpha-D-ribose 1-diphosphate: step 1/9. In terms of biological role, required for the first step of histidine biosynthesis. May allow the feedback regulation of ATP phosphoribosyltransferase activity by histidine. In Syntrophotalea carbinolica (strain DSM 2380 / NBRC 103641 / GraBd1) (Pelobacter carbinolicus), this protein is ATP phosphoribosyltransferase regulatory subunit.